A 463-amino-acid polypeptide reads, in one-letter code: MSDTKSNAMWGGRFAAGPDAIMEAINASIGFDRRLARQDIDGSRAHAAMLAQQGILSSKDAEAIREGLLTVLSEIETGQFAFSAALEDIHMNVEARLKELIGEPAGRLHTGRSRNDQVATDFKLWVRDQLDAADAGLLALLRALLAQAEAGADWVMPGFTHLQTAQPVTWGHHMMAYVEMFARDRGRMQDARARMNECPLGAAALAGTSFPLDRDATAQALGFDRPAANSLDAVSDRDFALEFLAAASICAMHLSRMAEELVIWSSAQFRFVTLSDRFSTGSSIMPQKKNPDAAELIRAKIGRIVGANVALLTVMKGLPLAYSKDMQEDKEQVFDAADTLMLALAAMEGMVRDMTANRASLEDAAASGFSTATDLADWLVRELNLPFRDAHHVTGTLVAMAEAKGCDLPDLSLAEMQSVHGAIRADVFEVLGVHNSVASRTSYGGTAPSQVRAQVARWKERLG.

This sequence belongs to the lyase 1 family. Argininosuccinate lyase subfamily.

The protein resides in the cytoplasm. The catalysed reaction is 2-(N(omega)-L-arginino)succinate = fumarate + L-arginine. It participates in amino-acid biosynthesis; L-arginine biosynthesis; L-arginine from L-ornithine and carbamoyl phosphate: step 3/3. The chain is Argininosuccinate lyase from Dinoroseobacter shibae (strain DSM 16493 / NCIMB 14021 / DFL 12).